The sequence spans 191 residues: UPF0312 protein PA0423 (191 aa).

The signal sequence occupies residues 1–23 (MLKKTLAALALGSALFTAGQAMA).

It belongs to the UPF0312 family. Type 1 subfamily.

The protein resides in the periplasm. The chain is UPF0312 protein PA0423 from Pseudomonas aeruginosa (strain ATCC 15692 / DSM 22644 / CIP 104116 / JCM 14847 / LMG 12228 / 1C / PRS 101 / PAO1).